Reading from the N-terminus, the 405-residue chain is 1-deoxy-D-xylulose 5-phosphate reductoisomerase (405 aa).

8 residues coordinate NADPH: threonine 16, glycine 17, serine 18, isoleucine 19, glycine 42, arginine 43, asparagine 44, and asparagine 130. Lysine 131 provides a ligand contact to 1-deoxy-D-xylulose 5-phosphate. Glutamate 132 serves as a coordination point for NADPH. Aspartate 156 is a binding site for Mn(2+). 4 residues coordinate 1-deoxy-D-xylulose 5-phosphate: serine 157, glutamate 158, serine 192, and histidine 215. Glutamate 158 provides a ligand contact to Mn(2+). Glycine 221 is an NADPH binding site. 4 residues coordinate 1-deoxy-D-xylulose 5-phosphate: serine 228, asparagine 233, lysine 234, and glutamate 237. Glutamate 237 serves as a coordination point for Mn(2+).

This sequence belongs to the DXR family. Requires Mg(2+) as cofactor. Mn(2+) serves as cofactor.

The catalysed reaction is 2-C-methyl-D-erythritol 4-phosphate + NADP(+) = 1-deoxy-D-xylulose 5-phosphate + NADPH + H(+). It participates in isoprenoid biosynthesis; isopentenyl diphosphate biosynthesis via DXP pathway; isopentenyl diphosphate from 1-deoxy-D-xylulose 5-phosphate: step 1/6. Functionally, catalyzes the NADPH-dependent rearrangement and reduction of 1-deoxy-D-xylulose-5-phosphate (DXP) to 2-C-methyl-D-erythritol 4-phosphate (MEP). This Pasteurella multocida (strain Pm70) protein is 1-deoxy-D-xylulose 5-phosphate reductoisomerase.